Consider the following 53-residue polypeptide: Bowman-Birk type proteinase inhibitor 1 (53 aa).

Intrachain disulfides connect C9–C24, C12–C51, C14–C22, C31–C38, and C40–C48.

In terms of assembly, dimer.

In terms of biological role, inhibits trypsin (IC(50)=6.20 nM), neutrophil elastase (ELANE) and, to a lesser extent, alpha-chymotrypsin (IC(50)=3.44 uM). In Lathyrus sativus (White vetchling), this protein is Bowman-Birk type proteinase inhibitor 1.